The sequence spans 510 residues: UDP-N-acetylmuramyl-tripeptide synthetase (510 aa).

S36 serves as a coordination point for UDP-N-acetyl-alpha-D-muramoyl-L-alanyl-D-glutamate. 113–119 (GTKGKTT) contacts ATP. UDP-N-acetyl-alpha-D-muramoyl-L-alanyl-D-glutamate is bound by residues 159 to 160 (TT), S186, and R194. Position 228 is an N6-carboxylysine (K228).

The protein belongs to the MurCDEF family. MurE subfamily. Carboxylation is probably crucial for Mg(2+) binding and, consequently, for the gamma-phosphate positioning of ATP.

The protein localises to the cytoplasm. The protein operates within cell wall biogenesis; peptidoglycan biosynthesis. In terms of biological role, catalyzes the addition of an amino acid to the nucleotide precursor UDP-N-acetylmuramoyl-L-alanyl-D-glutamate (UMAG) in the biosynthesis of bacterial cell-wall peptidoglycan. This chain is UDP-N-acetylmuramyl-tripeptide synthetase, found in Ligilactobacillus salivarius (strain UCC118) (Lactobacillus salivarius).